Here is a 465-residue protein sequence, read N- to C-terminus: Cysteine--tRNA ligase (465 aa).

Cysteine 29 is a Zn(2+) binding site. The 'HIGH' region signature appears at 31–41; the sequence is PTVYNYIHIGN. Zn(2+) is bound by residues cysteine 209, histidine 234, and glutamate 238. The 'KMSKS' region motif lies at 266–270; it reads KMSKS. An ATP-binding site is contributed by lysine 269. Position 270 is a phosphoserine (serine 270).

Belongs to the class-I aminoacyl-tRNA synthetase family. Monomer. The cofactor is Zn(2+).

It localises to the cytoplasm. The catalysed reaction is tRNA(Cys) + L-cysteine + ATP = L-cysteinyl-tRNA(Cys) + AMP + diphosphate. The sequence is that of Cysteine--tRNA ligase from Bacillus cereus (strain B4264).